A 412-amino-acid chain; its full sequence is Phosphoglycerate kinase (412 aa).

Residues valine 20, aspartate 21, phenylalanine 22, asparagine 23, glutamine 35, arginine 36, serine 59, histidine 60, glycine 62, arginine 63, leucine 118, arginine 119, histidine 166, and arginine 167 each coordinate (2R)-3-phosphoglycerate. Glycine 210 contacts ADP. CDP is bound at residue glycine 210. AMP is bound by residues alanine 211 and lysine 212. Alanine 211 serves as a coordination point for ATP. Alanine 211 contacts Mg(2+). Positions 214 and 215 each coordinate Mg(2+). Position 215 (aspartate 215) interacts with CDP. Residue lysine 216 participates in AMP binding. ATP is bound at residue lysine 216. Glycine 234 lines the ADP pocket. Glycine 234 contacts CDP. Residues glycine 235 and glycine 308 each contribute to the AMP site. Positions 235 and 308 each coordinate ATP. CDP-binding residues include glycine 333 and phenylalanine 338. Position 338 (phenylalanine 338) interacts with ADP. Residue glutamate 339 coordinates AMP. Residues glutamate 339, aspartate 370, and threonine 371 each coordinate ATP. Residue aspartate 370 participates in Mg(2+) binding.

This sequence belongs to the phosphoglycerate kinase family. In terms of assembly, monomer. The cofactor is Mg(2+).

Its subcellular location is the cytoplasm. It carries out the reaction (2R)-3-phosphoglycerate + ATP = (2R)-3-phospho-glyceroyl phosphate + ADP. It functions in the pathway carbohydrate degradation; glycolysis; pyruvate from D-glyceraldehyde 3-phosphate: step 2/5. In terms of biological role, catalyzes one of the two ATP producing reactions in the glycolytic pathway via the reversible conversion of 1,3-diphosphoglycerate to 3-phosphoglycerate. In addition to its role as a glycolytic enzyme, it seems that PGK-1 acts as a polymerase alpha cofactor protein (primer recognition protein). May play a role in sperm motility. In Aplysia californica (California sea hare), this protein is Phosphoglycerate kinase (PGK).